Here is a 166-residue protein sequence, read N- to C-terminus: ATP synthase subunit b (166 aa).

Residues 10–30 (LLFWMVIVFGIVFVILAKYGF) traverse the membrane as a helical segment.

The protein belongs to the ATPase B chain family. F-type ATPases have 2 components, F(1) - the catalytic core - and F(0) - the membrane proton channel. F(1) has five subunits: alpha(3), beta(3), gamma(1), delta(1), epsilon(1). F(0) has three main subunits: a(1), b(2) and c(10-14). The alpha and beta chains form an alternating ring which encloses part of the gamma chain. F(1) is attached to F(0) by a central stalk formed by the gamma and epsilon chains, while a peripheral stalk is formed by the delta and b chains.

Its subcellular location is the cell inner membrane. In terms of biological role, f(1)F(0) ATP synthase produces ATP from ADP in the presence of a proton or sodium gradient. F-type ATPases consist of two structural domains, F(1) containing the extramembraneous catalytic core and F(0) containing the membrane proton channel, linked together by a central stalk and a peripheral stalk. During catalysis, ATP synthesis in the catalytic domain of F(1) is coupled via a rotary mechanism of the central stalk subunits to proton translocation. Functionally, component of the F(0) channel, it forms part of the peripheral stalk, linking F(1) to F(0). This is ATP synthase subunit b from Phocaeicola vulgatus (strain ATCC 8482 / DSM 1447 / JCM 5826 / CCUG 4940 / NBRC 14291 / NCTC 11154) (Bacteroides vulgatus).